The primary structure comprises 199 residues: Probable GTP-binding protein EngB (199 aa).

Residues 28-199 (DLPEIALAGR…DSWDAILEQV (172 aa)) form the EngB-type G domain. GTP contacts are provided by residues 36-43 (GRSNVGKS), 63-67 (GKTQL), 81-84 (DVPG), 148-151 (TKAD), and 180-182 (FSS). Ser-43 and Thr-65 together coordinate Mg(2+).

This sequence belongs to the TRAFAC class TrmE-Era-EngA-EngB-Septin-like GTPase superfamily. EngB GTPase family. It depends on Mg(2+) as a cofactor.

Necessary for normal cell division and for the maintenance of normal septation. This chain is Probable GTP-binding protein EngB, found in Streptococcus pyogenes serotype M18 (strain MGAS8232).